The sequence spans 361 residues: Phosphate acyltransferase (361 aa).

It belongs to the PlsX family. In terms of assembly, homodimer. Probably interacts with PlsY.

The protein localises to the cytoplasm. It catalyses the reaction a fatty acyl-[ACP] + phosphate = an acyl phosphate + holo-[ACP]. It participates in lipid metabolism; phospholipid metabolism. Catalyzes the reversible formation of acyl-phosphate (acyl-PO(4)) from acyl-[acyl-carrier-protein] (acyl-ACP). This enzyme utilizes acyl-ACP as fatty acyl donor, but not acyl-CoA. This chain is Phosphate acyltransferase, found in Parvibaculum lavamentivorans (strain DS-1 / DSM 13023 / NCIMB 13966).